A 478-amino-acid polypeptide reads, in one-letter code: ATP synthase subunit beta (478 aa).

161 to 168 (GGAGVGKT) is an ATP binding site.

It belongs to the ATPase alpha/beta chains family. As to quaternary structure, F-type ATPases have 2 components, CF(1) - the catalytic core - and CF(0) - the membrane proton channel. CF(1) has five subunits: alpha(3), beta(3), gamma(1), delta(1), epsilon(1). CF(0) has four main subunits: a(1), b(1), b'(1) and c(9-12).

It localises to the cell inner membrane. The enzyme catalyses ATP + H2O + 4 H(+)(in) = ADP + phosphate + 5 H(+)(out). Its function is as follows. Produces ATP from ADP in the presence of a proton gradient across the membrane. The catalytic sites are hosted primarily by the beta subunits. The sequence is that of ATP synthase subunit beta from Gloeobacter violaceus (strain ATCC 29082 / PCC 7421).